The chain runs to 227 residues: Cell wall mannoprotein CIS3 (227 aa).

An N-terminal signal peptide occupies residues 1–21; that stretch reads MQFKNVALAASVAALSATASA. Residues 22 to 64 constitute a propeptide that is removed on maturation; sequence EGYTPGEPWSTLTPTGSISCGAAEYTTTFGIAVQAITSSKAKR. The stretch at 65–78 is one PIR1/2/3 repeat; the sequence is DVISQIGDGQVQAT. Ser-68 carries O-linked (Man) serine glycosylation. Thr-78 is a glycosylation site (O-linked (Man) threonine). The segment covering 83–124 has biased composition (low complexity); that stretch reads AQATDSQAQATTTATPTSSEKISSSASKTSTNATSSSCATPS. Residues 83–127 form a disordered region; that stretch reads AQATDSQAQATTTATPTSSEKISSSASKTSTNATSSSCATPSLKD. 4 O-linked (Man) serine glycosylation sites follow: Ser-105, Ser-106, Ser-107, and Ser-109. Thr-111 carries an O-linked (Man) threonine glycan. Residue Ser-112 is glycosylated (O-linked (Man) serine). Residue Thr-113 is glycosylated (O-linked (Man) threonine). An N-linked (GlcNAc...) asparagine glycan is attached at Asn-114. The O-linked (Man) threonine glycan is linked to Thr-116. O-linked (Man) serine glycans are attached at residues Ser-117 and Ser-118.

It belongs to the PIR protein family. In terms of processing, covalently linked to beta-1,3-glucan of the inner cell wall layer via an alkali-sensitive ester linkage between the gamma-carboxyl group of glutamic acid, arising from Gln-74 within the PIR1/2/3 repeat, and hydroxyl groups of glucoses of beta-1,3-glucan chains. Post-translationally, extensively O-mannosylated. Also N-glycosylated.

It is found in the secreted. The protein localises to the cell wall. Functionally, component of the outer cell wall layer. Required for stability of the cell wall and for optimal growth. Required for resistance against several antifungal and cell wall-perturbing agents. This Saccharomyces cerevisiae (strain ATCC 204508 / S288c) (Baker's yeast) protein is Cell wall mannoprotein CIS3 (CIS3).